A 597-amino-acid polypeptide reads, in one-letter code: Protein unc-93 homolog B1 (597 aa).

Residues 1–29 (MEAEPPLYPMAGAAGPQGDEDLLGVPDGP) form a disordered region. 5 helical membrane passes run 64–84 (VLAA…LLQM), 110–130 (KMLM…PVLI), 132–152 (FFGT…FVST), 160–180 (TLVP…ASMG), and 223–243 (IFYS…IYFL). Asn-251 and Asn-272 each carry an N-linked (GlcNAc...) asparagine glycan. The next 5 membrane-spanning stretches (helical) occupy residues 285–305 (LIVV…LVLG), 343–363 (LVPF…GIAL), 378–398 (LLVA…LGLW), 403–423 (VPLV…FFWA), and 428–448 (VLQH…GSAL). The N-linked (GlcNAc...) asparagine glycan is linked to Asn-449. 2 consecutive transmembrane segments (helical) span residues 469 to 489 (FIFT…YLGS) and 491 to 511 (LHMK…AVSY). Residues 522–597 (VAPRQPRIPR…AQGGDGPEEQ (76 aa)) are disordered. Phosphoserine is present on residues Ser-547 and Ser-550.

This sequence belongs to the unc-93 family. In terms of assembly, interacts with TLR3, TLR5, TLR7, and TLR9 (probably via transmembrane domain). N-glycosylated. Expressed in plasmocytoid dendritic cells (at protein level). Highly expressed in antigen-presenting cells. Expressed in heart, and at lower level in kidney. Expressed at low level in other tissues.

It localises to the endoplasmic reticulum membrane. The protein localises to the endosome. Its subcellular location is the lysosome. The protein resides in the cytoplasmic vesicle. It is found in the phagosome. In terms of biological role, plays an important role in innate and adaptive immunity by regulating nucleotide-sensing Toll-like receptor (TLR) signaling. Required for the transport of a subset of TLRs (including TLR3, TLR7 and TLR9) from the endoplasmic reticulum to endolysosomes where they can engage pathogen nucleotides and activate signaling cascades. May play a role in autoreactive B-cells removal. The protein is Protein unc-93 homolog B1 of Homo sapiens (Human).